Consider the following 122-residue polypeptide: uncharacterized protein (122 aa).

A helical transmembrane segment spans residues 9-25; sequence AFPSPVFLGGVFFVFFF.

The protein resides in the cytoplasm. It is found in the nucleus. It localises to the membrane. This is an uncharacterized protein from Saccharomyces cerevisiae (strain ATCC 204508 / S288c) (Baker's yeast).